Reading from the N-terminus, the 711-residue chain is Polyribonucleotide nucleotidyltransferase (711 aa).

2 residues coordinate Mg(2+): aspartate 490 and aspartate 496. One can recognise a KH domain in the interval 557–619 (PRIETMTIPK…KCIDDAMRII (63 aa)). The S1 motif domain maps to 629 to 699 (GEVYVGKVRS…KTGKFKLSHK (71 aa)).

This sequence belongs to the polyribonucleotide nucleotidyltransferase family. Mg(2+) serves as cofactor.

It is found in the cytoplasm. The enzyme catalyses RNA(n+1) + phosphate = RNA(n) + a ribonucleoside 5'-diphosphate. Functionally, involved in mRNA degradation. Catalyzes the phosphorolysis of single-stranded polyribonucleotides processively in the 3'- to 5'-direction. This Phocaeicola vulgatus (strain ATCC 8482 / DSM 1447 / JCM 5826 / CCUG 4940 / NBRC 14291 / NCTC 11154) (Bacteroides vulgatus) protein is Polyribonucleotide nucleotidyltransferase.